An 843-amino-acid polypeptide reads, in one-letter code: Protein P (843 aa).

The terminal protein domain (TP) stretch occupies residues 1 to 177; that stretch reads MPLSYQHFRK…FCGSPYSWEQ (177 aa). Positions 178–346 are spacer; it reads ELQHGRLVLQ…HCLFHIVNLI (169 aa). 2 disordered regions span residues 221-240 and 289-315; these read SRLG…QGGS and VSTS…SRSQ. Positions 223 to 235 are enriched in low complexity; sequence LGPQPTQGQLAGL. The segment at 347–690 is polymerase/reverse transcriptase domain (RT); sequence DDWGPCAEHG…YLNLYPVARQ (344 aa). Residues 357–600 enclose the Reverse transcriptase domain; sequence EHRIRTPRTP…YSLNFMGYVI (244 aa). Residues aspartate 429, aspartate 551, and aspartate 552 each coordinate Mg(2+).

This sequence belongs to the hepadnaviridae P protein family.

The catalysed reaction is DNA(n) + a 2'-deoxyribonucleoside 5'-triphosphate = DNA(n+1) + diphosphate. It catalyses the reaction Endonucleolytic cleavage to 5'-phosphomonoester.. Its activity is regulated as follows. Activated by host HSP70 and HSP40 in vitro to be able to bind the epsilon loop of the pgRNA. Because deletion of the RNase H region renders the protein partly chaperone-independent, the chaperones may be needed indirectly to relieve occlusion of the RNA-binding site by this domain. Inhibited by several reverse-transcriptase inhibitors: Lamivudine, Adefovir and Entecavir. Its function is as follows. Multifunctional enzyme that converts the viral RNA genome into dsDNA in viral cytoplasmic capsids. This enzyme displays a DNA polymerase activity that can copy either DNA or RNA templates, and a ribonuclease H (RNase H) activity that cleaves the RNA strand of RNA-DNA heteroduplexes in a partially processive 3'- to 5'-endonucleasic mode. Neo-synthesized pregenomic RNA (pgRNA) are encapsidated together with the P protein, and reverse-transcribed inside the nucleocapsid. Initiation of reverse-transcription occurs first by binding the epsilon loop on the pgRNA genome, and is initiated by protein priming, thereby the 5'-end of (-)DNA is covalently linked to P protein. Partial (+)DNA is synthesized from the (-)DNA template and generates the relaxed circular DNA (RC-DNA) genome. After budding and infection, the RC-DNA migrates in the nucleus, and is converted into a plasmid-like covalently closed circular DNA (cccDNA). The activity of P protein does not seem to be necessary for cccDNA generation, and is presumably released from (+)DNA by host nuclear DNA repair machinery. The protein is Protein P of Homo sapiens (Human).